The sequence spans 403 residues: MAAVGSPGSLESAPRIMRLVAECSRSRARAGELRLPHGTVATPVFMPVGTQATMKGITAEQLDSLGCRICLGNTYHLGLRPGPELIQKAHGLHGFMNWPHNLLTDSGGFQMVSLISLSEVTEEGVRFRSPYDGEETLLSPERSVEIQNALGSDIIMQLDDVVSSTVTGPRVEEAMHRSVRWLDRCIAAHKRQDKQNLFAIIQGGLNADLRTTCLKEMTKRDVPGFAIGGLSGGESKEQFWKMVALSTSMLPKDKPRYLMGVGYATDLVVCVALGCDMFDCVYPTRTARFGSALVPTGNLQLKKQQYAKDFSPINPECPCATCQTHSRAFLHTLLHSDNTAALHHLTVHNIAYQLQLLSAARSSILEQRFPDFVRNFMRTMYGDHSLCPAWAIEALASVGITLT.

Residue alanine 2 is modified to N-acetylalanine. The active-site Proton acceptor is aspartate 105. A queuine-binding site is contributed by 105-109 (DSGGF). Phosphoserine is present on serine 139. The queuine site is built by aspartate 159, glutamine 202, and glycine 229. An RNA binding region spans residues 260 to 266 (GVGYATD). Aspartate 279 (nucleophile) is an active-site residue. Residues 284–288 (TRTAR) are RNA binding; important for wobble base 34 recognition. Residues cysteine 317, cysteine 319, cysteine 322, and histidine 348 each contribute to the Zn(2+) site.

It belongs to the queuine tRNA-ribosyltransferase family. As to quaternary structure, heterodimer of a catalytic subunit QTRT1 and an accessory subunit QTRT2. The cofactor is Zn(2+).

The protein localises to the cytoplasm. It localises to the mitochondrion outer membrane. It carries out the reaction guanosine(34) in tRNA + queuine = queuosine(34) in tRNA + guanine. In terms of biological role, catalytic subunit of the queuine tRNA-ribosyltransferase (TGT) that catalyzes the base-exchange of a guanine (G) residue with queuine (Q) at position 34 (anticodon wobble position) in tRNAs with GU(N) anticodons (tRNA-Asp, -Asn, -His and -Tyr), resulting in the hypermodified nucleoside queuosine (7-(((4,5-cis-dihydroxy-2-cyclopenten-1-yl)amino)methyl)-7-deazaguanosine). Catalysis occurs through a double-displacement mechanism. The nucleophile active site attacks the C1' of nucleotide 34 to detach the guanine base from the RNA, forming a covalent enzyme-RNA intermediate. The proton acceptor active site deprotonates the incoming queuine, allowing a nucleophilic attack on the C1' of the ribose to form the product. The protein is Queuine tRNA-ribosyltransferase catalytic subunit 1 of Rattus norvegicus (Rat).